A 130-amino-acid chain; its full sequence is Small ribosomal subunit protein uS11c (130 aa).

This sequence belongs to the universal ribosomal protein uS11 family. In terms of assembly, part of the 30S ribosomal subunit.

It is found in the plastid. The protein localises to the chloroplast. This Porphyra purpurea (Red seaweed) protein is Small ribosomal subunit protein uS11c.